Here is a 366-residue protein sequence, read N- to C-terminus: Probable dual-specificity RNA methyltransferase RlmN (366 aa).

The active-site Proton acceptor is the Glu-108. A Radical SAM core domain is found at 114-352 (YSDRSTLCIS…CTVRDTKGQE (239 aa)). Residues Cys-121 and Cys-357 are joined by a disulfide bond. [4Fe-4S] cluster contacts are provided by Cys-128, Cys-132, and Cys-135. Residues 178-179 (GE), Ser-212, 235-237 (SLH), and Asn-314 contribute to the S-adenosyl-L-methionine site. Catalysis depends on Cys-357, which acts as the S-methylcysteine intermediate.

It belongs to the radical SAM superfamily. RlmN family. The cofactor is [4Fe-4S] cluster.

The protein localises to the cytoplasm. The enzyme catalyses adenosine(2503) in 23S rRNA + 2 reduced [2Fe-2S]-[ferredoxin] + 2 S-adenosyl-L-methionine = 2-methyladenosine(2503) in 23S rRNA + 5'-deoxyadenosine + L-methionine + 2 oxidized [2Fe-2S]-[ferredoxin] + S-adenosyl-L-homocysteine. It catalyses the reaction adenosine(37) in tRNA + 2 reduced [2Fe-2S]-[ferredoxin] + 2 S-adenosyl-L-methionine = 2-methyladenosine(37) in tRNA + 5'-deoxyadenosine + L-methionine + 2 oxidized [2Fe-2S]-[ferredoxin] + S-adenosyl-L-homocysteine. Its function is as follows. Specifically methylates position 2 of adenine 2503 in 23S rRNA and position 2 of adenine 37 in tRNAs. The protein is Probable dual-specificity RNA methyltransferase RlmN of Corynebacterium glutamicum (strain ATCC 13032 / DSM 20300 / JCM 1318 / BCRC 11384 / CCUG 27702 / LMG 3730 / NBRC 12168 / NCIMB 10025 / NRRL B-2784 / 534).